A 223-amino-acid chain; its full sequence is Pre-mRNA-splicing factor SPF27 (223 aa).

A coiled-coil region spans residues Asn-139–Tyr-223.

Belongs to the SPF27 family. In terms of assembly, component of the pre-catalytic and catalytic spliceosome complexes. Component of the postcatalytic spliceosome P complex.

The protein localises to the nucleus. In terms of biological role, required for pre-mRNA splicing as component of the activated spliceosome. May have a scaffolding role in the spliceosome assembly as it contacts all other components of the core complex. This is Pre-mRNA-splicing factor SPF27 (bcas2) from Xenopus tropicalis (Western clawed frog).